A 297-amino-acid chain; its full sequence is Phosphoribosylaminoimidazole-succinocarboxamide synthase (297 aa).

It belongs to the SAICAR synthetase family.

The enzyme catalyses 5-amino-1-(5-phospho-D-ribosyl)imidazole-4-carboxylate + L-aspartate + ATP = (2S)-2-[5-amino-1-(5-phospho-beta-D-ribosyl)imidazole-4-carboxamido]succinate + ADP + phosphate + 2 H(+). Its pathway is purine metabolism; IMP biosynthesis via de novo pathway; 5-amino-1-(5-phospho-D-ribosyl)imidazole-4-carboxamide from 5-amino-1-(5-phospho-D-ribosyl)imidazole-4-carboxylate: step 1/2. In Mycobacterium leprae (strain TN), this protein is Phosphoribosylaminoimidazole-succinocarboxamide synthase (purC).